The following is a 175-amino-acid chain: Large ribosomal subunit protein uL18 (175 aa).

Belongs to the universal ribosomal protein uL18 family. Part of the 50S ribosomal subunit. Contacts the 5S and 23S rRNAs.

This is one of the proteins that bind and probably mediate the attachment of the 5S RNA into the large ribosomal subunit, where it forms part of the central protuberance. This Methanospirillum hungatei JF-1 (strain ATCC 27890 / DSM 864 / NBRC 100397 / JF-1) protein is Large ribosomal subunit protein uL18.